Consider the following 312-residue polypeptide: Ribosomal RNA small subunit methyltransferase H (312 aa).

Residues 34–36 (AGH), D54, F81, D102, and Q109 each bind S-adenosyl-L-methionine.

Belongs to the methyltransferase superfamily. RsmH family.

The protein resides in the cytoplasm. It catalyses the reaction cytidine(1402) in 16S rRNA + S-adenosyl-L-methionine = N(4)-methylcytidine(1402) in 16S rRNA + S-adenosyl-L-homocysteine + H(+). In terms of biological role, specifically methylates the N4 position of cytidine in position 1402 (C1402) of 16S rRNA. In Geobacter sp. (strain M21), this protein is Ribosomal RNA small subunit methyltransferase H.